We begin with the raw amino-acid sequence, 256 residues long: Chlorophyll a-b binding protein CP24 10A, chloroplastic (256 aa).

2 helical membrane-spanning segments follow: residues 106–126 and 134–154; these read WAMA…IPWF and AIAP…MGWV.

The protein belongs to the ELIP/psbS family.

It is found in the plastid. The protein resides in the chloroplast thylakoid membrane. The chain is Chlorophyll a-b binding protein CP24 10A, chloroplastic (CAP10A) from Solanum lycopersicum (Tomato).